The primary structure comprises 413 residues: 3-hydroxy-3-methylglutaryl-coenzyme A reductase (413 aa).

Active-site charge relay system residues include E106 and D312. The active-site Proton donor is the H408.

Belongs to the HMG-CoA reductase family.

It carries out the reaction (R)-mevalonate + 2 NADP(+) + CoA = (3S)-3-hydroxy-3-methylglutaryl-CoA + 2 NADPH + 2 H(+). The protein operates within metabolic intermediate biosynthesis; (R)-mevalonate biosynthesis; (R)-mevalonate from acetyl-CoA: step 3/3. Functionally, converts HMG-CoA to mevalonate. This chain is 3-hydroxy-3-methylglutaryl-coenzyme A reductase (hmgA), found in Pyrococcus horikoshii (strain ATCC 700860 / DSM 12428 / JCM 9974 / NBRC 100139 / OT-3).